Reading from the N-terminus, the 269-residue chain is Putative phosphatase M6_Spy0533 (269 aa).

Residue D9 is the Nucleophile of the active site. Residue D9 participates in Mg(2+) binding. Residue I10 participates in phosphate binding. D11 lines the Mg(2+) pocket. Phosphate is bound by residues 43-44 (TG) and K196. Position 219 (D219) interacts with Mg(2+). N222 contacts phosphate.

It depends on Mg(2+) as a cofactor.

The sequence is that of Putative phosphatase M6_Spy0533 from Streptococcus pyogenes serotype M6 (strain ATCC BAA-946 / MGAS10394).